The sequence spans 194 residues: Endoribonuclease YbeY (194 aa).

Zn(2+) is bound by residues H127, H131, and D137. Residues 162–194 are disordered; that stretch reads PLSNDEDSAPEQDDSFDDDASDSSGGIMSGGVS. The segment covering 165–182 has biased composition (acidic residues); that stretch reads NDEDSAPEQDDSFDDDAS.

Belongs to the endoribonuclease YbeY family. It depends on Zn(2+) as a cofactor.

The protein resides in the cytoplasm. Its function is as follows. Single strand-specific metallo-endoribonuclease involved in late-stage 70S ribosome quality control and in maturation of the 3' terminus of the 16S rRNA. The sequence is that of Endoribonuclease YbeY from Rhodopirellula baltica (strain DSM 10527 / NCIMB 13988 / SH1).